A 267-amino-acid chain; its full sequence is Diphthine synthase (267 aa).

S-adenosyl-L-methionine-binding positions include L9, D87, I90, 115–116, L166, L205, and H230; that span reads SI.

It belongs to the diphthine synthase family. As to quaternary structure, homodimer.

It carries out the reaction 2-[(3S)-amino-3-carboxypropyl]-L-histidyl-[translation elongation factor 2] + 3 S-adenosyl-L-methionine = diphthine-[translation elongation factor 2] + 3 S-adenosyl-L-homocysteine + 3 H(+). The protein operates within protein modification; peptidyl-diphthamide biosynthesis. In terms of biological role, S-adenosyl-L-methionine-dependent methyltransferase that catalyzes the trimethylation of the amino group of the modified target histidine residue in translation elongation factor 2 (EF-2), to form an intermediate called diphthine. The three successive methylation reactions represent the second step of diphthamide biosynthesis. The polypeptide is Diphthine synthase (Staphylothermus marinus (strain ATCC 43588 / DSM 3639 / JCM 9404 / F1)).